The sequence spans 658 residues: Exoribonuclease 2 (658 aa).

In terms of domain architecture, RNB spans 189-530 (REDLTSLYFT…VNHRLIKQVL (342 aa)). Residues 576 to 658 (AVEFDCEIAD…ETRSIVGNII (83 aa)) form the S1 motif domain.

It belongs to the RNR ribonuclease family. RNase II subfamily.

The protein localises to the cytoplasm. It carries out the reaction Exonucleolytic cleavage in the 3'- to 5'-direction to yield nucleoside 5'-phosphates.. Functionally, involved in mRNA degradation. Hydrolyzes single-stranded polyribonucleotides processively in the 3' to 5' direction. The sequence is that of Exoribonuclease 2 from Actinobacillus pleuropneumoniae serotype 5b (strain L20).